Reading from the N-terminus, the 502-residue chain is MVNNNNKNNKINDRENEENEKNKKKDKIYENKIGINENNNENNNYQNENFIYTSGDSNDTQEGDISEIQEESTNENNKKLKKRKIKKTKSLYFYKCVTGPDKLFFIVTQIFILVPSLFFEIKLVPISLEISKKLEISNYIITLTLLVFIFYNLYKCAFTNPGIITRNNIEESKKDKIKLTKLQATKKALKKFITSGMDEIANDDPISSSSDFSDSDDDDQDEQGGSSSARNSFENSGDFIVEMEQPTNSNNNNSNNNNNNNKNRNRNNNNNNNNNNNNKNQSKYKEIQIGDSDFKYKCKFCITCGLYREPRSFHCSTCNNCVENFDHHCVWIGNCIGRRNYREFFYFITTTLIYALYLLSMSIVFLNQIVNTTESPANKINNNNINSNSSNHNSSNDLNEKFEKSINNILYALRTTSGGLCIFIIIFGFIMSLLLGFLVSYHIRLTLSNKSTIEDFKKIFENQINPYDKGWLFNLKIKLFNFNNSNNNININNNNTNNNINS.

The segment at 1–80 (MVNNNNKNNK…ESTNENNKKL (80 aa)) is disordered. Residues 10 to 30 (KINDRENEENEKNKKKDKIYE) are compositionally biased toward basic and acidic residues. The segment covering 31–52 (NKIGINENNNENNNYQNENFIY) has biased composition (low complexity). The N-linked (GlcNAc...) asparagine glycan is linked to asparagine 58. Positions 59-73 (DTQEGDISEIQEEST) are enriched in acidic residues. The next 2 membrane-spanning stretches (helical) occupy residues 104-124 (FFIV…IKLV) and 134-154 (LEIS…YNLY). Residues 200 to 281 (IANDDPISSS…NNNNNNNKNQ (82 aa)) form a disordered region. Positions 203–212 (DDPISSSSDF) are enriched in low complexity. A compositionally biased stretch (acidic residues) spans 213–222 (SDSDDDDQDE). The span at 248-280 (NSNNNNSNNNNNNNKNRNRNNNNNNNNNNNNKN) shows a compositional bias: low complexity. 2 N-linked (GlcNAc...) asparagine glycosylation sites follow: asparagine 252 and asparagine 280. Residues 299–349 (KFCITCGLYREPRSFHCSTCNNCVENFDHHCVWIGNCIGRRNYREFFYFIT) enclose the DHHC domain. Cysteine 329 (S-palmitoyl cysteine intermediate) is an active-site residue. Residues 344 to 364 (FFYFITTTLIYALYLLSMSIV) traverse the membrane as a helical segment. N-linked (GlcNAc...) asparagine glycans are attached at residues asparagine 371, asparagine 388, and asparagine 393. A helical transmembrane segment spans residues 419–439 (GLCIFIIIFGFIMSLLLGFLV). Asparagine 449, asparagine 483, and asparagine 494 each carry an N-linked (GlcNAc...) asparagine glycan.

Belongs to the DHHC palmitoyltransferase family.

Its subcellular location is the membrane. It carries out the reaction L-cysteinyl-[protein] + hexadecanoyl-CoA = S-hexadecanoyl-L-cysteinyl-[protein] + CoA. This Dictyostelium discoideum (Social amoeba) protein is Putative ZDHHC-type palmitoyltransferase 3.